The following is a 650-amino-acid chain: Phosphatidylinositol 4-kinase gamma 7 (650 aa).

A Ubiquitin-like; degenerate domain is found at 46 to 103 (RRVFVQTETGCVLGMELDRSDNVHTVKRRLQIALNFPTEESSLTYGDMVLTNDLSAVR). Residues 166–463 (GVEPLPVHSG…SVTERDVFSP (298 aa)) enclose the PI3K/PI4K catalytic domain. Residues 172 to 178 (VHSGLGG) form a G-loop region. ATP contacts are provided by residues 173–179 (HSGLGGA), Lys-194, and 283–286 (QKFV). The tract at residues 316–324 (FNTDRHGGN) is catalytic loop. The interval 343 to 369 (PIDHGLCLPETLEDPYFEWIHWPQASL) is activation loop. An ATP-binding site is contributed by Asp-345. Disordered regions lie at residues 508-534 (SLGK…ENTV) and 560-595 (STSM…KSAN). Residues 516 to 529 (IKEEEEDEEEEEDK) are compositionally biased toward acidic residues. Polar residues-rich tracts occupy residues 560-569 (STSMKNTHLS) and 585-595 (ENTSSGHKSAN). Ser-593 bears the Phosphoserine mark.

It belongs to the PI3/PI4-kinase family. Type II PI4K subfamily.

The catalysed reaction is a 1,2-diacyl-sn-glycero-3-phospho-(1D-myo-inositol) + ATP = a 1,2-diacyl-sn-glycero-3-phospho-(1D-myo-inositol 4-phosphate) + ADP + H(+). In terms of biological role, the phosphorylation of phosphatidylinositol (PI) to PI4P is the first committed step in the generation of phosphatidylinositol 4,5-bisphosphate (PIP2), a precursor of the second messenger inositol 1,4,5-trisphosphate (InsP3). Undergoes autophosphorylation and phosphorylates serine/threonine residues of protein substrates. The sequence is that of Phosphatidylinositol 4-kinase gamma 7 from Arabidopsis thaliana (Mouse-ear cress).